The sequence spans 310 residues: Porphobilinogen deaminase (310 aa).

The residue at position 236 (cysteine 236) is an S-(dipyrrolylmethanemethyl)cysteine.

This sequence belongs to the HMBS family. In terms of assembly, monomer. Dipyrromethane is required as a cofactor.

The catalysed reaction is 4 porphobilinogen + H2O = hydroxymethylbilane + 4 NH4(+). The protein operates within porphyrin-containing compound metabolism; protoporphyrin-IX biosynthesis; coproporphyrinogen-III from 5-aminolevulinate: step 2/4. Functionally, tetrapolymerization of the monopyrrole PBG into the hydroxymethylbilane pre-uroporphyrinogen in several discrete steps. The sequence is that of Porphobilinogen deaminase from Nitratiruptor sp. (strain SB155-2).